The primary structure comprises 80 residues: MTITNEQVERINELARKKKAEGLSEAELEEQAFLRRAYLDSVKANFRSQVETIKVIDEKTGEDVTPDKLKEIQRKNGMRD.

This sequence belongs to the UPF0291 family.

It localises to the cytoplasm. This is UPF0291 protein LACR_1198 from Lactococcus lactis subsp. cremoris (strain SK11).